The chain runs to 129 residues: D-ribose pyranase (129 aa).

Residue His20 is the Proton donor of the active site. Substrate is bound by residues Asp28, His96, and 118-120; that span reads YAN.

Belongs to the RbsD / FucU family. RbsD subfamily. Homodecamer.

The protein localises to the cytoplasm. It carries out the reaction beta-D-ribopyranose = beta-D-ribofuranose. It participates in carbohydrate metabolism; D-ribose degradation; D-ribose 5-phosphate from beta-D-ribopyranose: step 1/2. Catalyzes the interconversion of beta-pyran and beta-furan forms of D-ribose. This Staphylococcus saprophyticus subsp. saprophyticus (strain ATCC 15305 / DSM 20229 / NCIMB 8711 / NCTC 7292 / S-41) protein is D-ribose pyranase.